A 759-amino-acid polypeptide reads, in one-letter code: MDGNRRVRFNTDRRPYLSPLQTSFPSSTSFQTPTFLIEEDDEDTEDDDGPQVLPVHRAPSPAAFRKRGSITSMDQYLVNMPAVPSPTASKVGLLDARNTDVESYAASYKTQSSSNSVNSLPMRRPTLDRSYSAPMIAAKNLQSDPEKMSNVESTNELPSTTTEAYKLVAAHTAARLEHMRLNALKAANDEGEDVKDNEQDDNIDESDPFANPKASYRGGVLSNLLKLYTNSNTVTSSRISLKHTDPTKWQKHAKRTASSNSLTDLLHASNQTFMAPASGLQSTEEIPQFSKTGHSRGRKFNFHHHSRKNSGLNEEYKITIHLADILQRQKYILKLCRALMVYGAPSHRLEEHMASAAKVLEIEGQFLYIPGCMIVSFGDVNTHTSDMHIVRVNQTIDLGRLKLVHDIYKAVLHDRMGVEEAIRGLDEIFKSPPYFRTWILVVFYGFASATILPMSFQGGWIDLPIAFILGCLVGILQHYIAPRSTMYNSLFEVTGSIITSFLSRAFGSIRYSGGRRFCFSALAEGAIVLILPGYIVLCGSLELQSKNIVAGGVRMFYAIIYSLFLSFGISIGAALYGWMDHNATDSTSCPVSTQMDDKWKILFVPLFTLCLLIVNQARPSQWPVSIFISCAGYVVNYFTAKHFGSNPIANAIGSFAIGCLGNIYSRLGRGVAFAAVLPAIFVQVPSGLAAQGGISSGIEVATSLTNNTYNTSSSSTLDVNSLKFGLVMVQIAIGISVGLFASALVVYPFGKRRSGLFSF.

Disordered stretches follow at residues 1–31 (MDGN…TSFQ) and 188–211 (NDEG…PFAN). The segment covering 17–31 (LSPLQTSFPSSTSFQ) has biased composition (low complexity). Residues 189 to 207 (DEGEDVKDNEQDDNIDESD) show a composition bias toward acidic residues. Transmembrane regions (helical) follow at residues 434–454 (YFRT…ILPM), 456–476 (FQGG…VGIL), 486–505 (MYNS…LSRA), 517–537 (FCFS…YIVL), 555–575 (MFYA…GAAL), 597–617 (DKWK…VNQA), 620–640 (SQWP…YFTA), 643–663 (FGSN…LGNI), 670–690 (GVAF…GLAA), and 726–746 (LVMV…ALVV).

It belongs to the ThrE exporter (TC 2.A.79) family.

It is found in the endoplasmic reticulum membrane. This is an uncharacterized protein from Schizosaccharomyces pombe (strain 972 / ATCC 24843) (Fission yeast).